A 662-amino-acid polypeptide reads, in one-letter code: MMEPCEYREYREYYRARGKEMVDYISQYLSTVRERQVTPNVQPGYLRAQLPASAPEEPDSWDSIFGDIERVIMPGVVHWQSPHMHAYYPALTSWPSLLGDMLADAINCLGFTWASSPACTELEMNIMDWLAKMLGLPEYFLHHHPSSRGGGVLQSTVSESTLIALLAARKNKILAMKACEPDANESSLNARLVAYTSDQAHSSVEKAGLISLVKIRFLPVDDNFSLRGEALQKAIEEDKQQGLVPVFVCATLGTTGVCAFDRLSELGPICASEGLWLHVDAAYAGTAFLCPELRGFLEGIEYADSFTFNPSKWMMVHFDCTGFWVKDKYKLQQTFSVNPIYLRHANSGAATDFMHWQIPLSRRFRSIKLWFVIRSFGVKNLQAHVRHGTEMAKYFESLVRSDPSFEIPAKRHLGLVVFRLKGPNCLTESVLKEIAKAGQLFLIPATIQDKLIIRFTVTSQFTTKEDILRDWHLIQEAANLVLSQHCTSQPSPRAKNVIPPPPGTRGLSLESVSEGGDDPAQARKIIKQPGASLARREGGSDLETMPDPFDDCFSEEAPNTTKHKLSSFLFSYLSVQNRRKTTRSLSCNSVPMSAQKSLPADASLKNGGSFRARIFSGFPEQMMMMKKGAFKKLIKFYSVPSFPECSSQCARQLPCCPLEAMV.

Residues Y88 and H201 each contribute to the substrate site. At K312 the chain carries N6-(pyridoxal phosphate)lysine. The tract at residues 489–518 is disordered; sequence QPSPRAKNVIPPPPGTRGLSLESVSEGGDD.

It belongs to the group II decarboxylase family. As to quaternary structure, homodimer. Pyridoxal 5'-phosphate serves as cofactor.

It catalyses the reaction L-histidine + H(+) = histamine + CO2. Its pathway is amine and polyamine biosynthesis; histamine biosynthesis; histamine from L-histidine: step 1/1. Its function is as follows. Catalyzes the biosynthesis of histamine from histidine. The protein is Histidine decarboxylase (Hdc) of Mus musculus (Mouse).